A 145-amino-acid polypeptide reads, in one-letter code: Brain and acute leukemia cytoplasmic protein (145 aa).

A lipid anchor (N-myristoyl glycine) is attached at Gly-2. Residue Cys-3 is the site of S-palmitoyl cysteine attachment. The segment at 3–35 is interaction with CAMK2A; the sequence is CGGSRADAIEPRYYESWTRETESTWLTYTDSDA. The disordered stretch occupies residues 27–119; it reads WLTYTDSDAP…AKRDAKRMPA (93 aa). Over residues 32 to 46 the composition is skewed to low complexity; the sequence is DSDAPPSAAAPDSGP. A compositionally biased stretch (polar residues) spans 83-108; that stretch reads CETQCPNPQSLSSGPLTQKQNGLQTT. Basic and acidic residues predominate over residues 109–119; it reads EAKRDAKRMPA.

As to quaternary structure, interacts with CAMK2A. Palmitoylation and myristoylation target the protein to the lipid rafts. In terms of tissue distribution, predominantly expressed in neuroectoderm-derived tissues. Expressed in the brain and spinal cord, and at low levels, in the adrenal gland. In the bone marrow, confined to the CD34+ progenitor cells. Not found in peripheral blood mononuclear cells, nor lymph nodes. Tends to be expressed at high levels in acute myeloid leukemia and glioblastoma cells.

It is found in the cytoplasm. The protein localises to the synapse. The protein resides in the synaptosome. It localises to the membrane raft. Its subcellular location is the postsynaptic density. May play a synaptic role at the postsynaptic lipid rafts possibly through interaction with CAMK2A. The polypeptide is Brain and acute leukemia cytoplasmic protein (Homo sapiens (Human)).